The sequence spans 351 residues: MTILSDVKALGQQIWLDNLSRSLVQSGELAQMLKQGVCGVTSNPAIFQKAFAGDALYADEVAALKQQDLTPKQRYETMAVADVRAACGVCLAEHESTGGKTGFVSLEVSPELSKDAQGTVEEARRLYAAIGCKNAMIKVPATDAGIDALETLVSDGISVNLTLLFSRAQTLKAYAAYARGIAKRLAAGQSVAHIHVVASFFISRVDSALDTTLPDRLKGKIAIALAKAAYQDWEQYFTAPEFAALEAQGANRVQLLWASTGVKNPAYPDTLYVDSLIGAHTVNTVPDATLKAFIDHGTAKATLTEGADEAQAQLAEIAALGIDVETLAARLQEDGLKQFEEAFEKLLAPLV.

Residue lysine 138 is the Schiff-base intermediate with substrate of the active site.

It belongs to the transaldolase family. Type 2 subfamily.

Its subcellular location is the cytoplasm. It catalyses the reaction D-sedoheptulose 7-phosphate + D-glyceraldehyde 3-phosphate = D-erythrose 4-phosphate + beta-D-fructose 6-phosphate. It participates in carbohydrate degradation; pentose phosphate pathway; D-glyceraldehyde 3-phosphate and beta-D-fructose 6-phosphate from D-ribose 5-phosphate and D-xylulose 5-phosphate (non-oxidative stage): step 2/3. In terms of biological role, transaldolase is important for the balance of metabolites in the pentose-phosphate pathway. This Neisseria meningitidis serogroup A / serotype 4A (strain DSM 15465 / Z2491) protein is Transaldolase (tal).